The primary structure comprises 347 residues: CDK2-associated and cullin domain-containing protein 1 (347 aa).

Residues 1–11 (MEESMEEEEML) are compositionally biased toward acidic residues. Disordered stretches follow at residues 1 to 63 (MEES…LPGG) and 320 to 347 (RGDQSRKRAGDELAYNSPSACASSRGYR). The segment covering 34–49 (QPPPAPPLPPPPPPRP) has biased composition (pro residues).

Belongs to the cullin family. Interacts with CDK2.

Cell cycle associated protein capable of promoting cell proliferation through the activation of CDK2 at the G1/S phase transition. The protein is CDK2-associated and cullin domain-containing protein 1 (Cacul1) of Rattus norvegicus (Rat).